The chain runs to 354 residues: Guanine nucleotide-binding protein G(i) subunit alpha-1 (354 aa).

Gly2 carries the N-myristoyl glycine lipid modification. Cys3 is lipidated: S-palmitoyl cysteine. A G-alpha domain is found at 32–354 (REVKLLLLGA…KNNLKDCGLF (323 aa)). The segment at 35 to 48 (KLLLLGAGESGKST) is G1 motif. Residues 43 to 48 (ESGKST), 150 to 151 (DS), and 175 to 178 (LRTR) contribute to the GTP site. Ser47 is a Mg(2+) binding site. The tract at residues 173–181 (DVLRTRVKT) is G2 motif. Thr181 is a Mg(2+) binding site. Positions 196 to 205 (FKMFDVGGQR) are G3 motif. GTP contacts are provided by residues 200-204 (DVGGQ), 269-272 (NKKD), and Ala326. A G4 motif region spans residues 265–272 (ILFLNKKD). Residues 324-329 (TCATDT) are G5 motif.

The protein belongs to the G-alpha family. G(i/o/t/z) subfamily. In terms of assembly, heterotrimeric G proteins are composed of 3 units; alpha, beta and gamma. The alpha chain contains the guanine nucleotide binding site. Part of a spindle orientation complex at least composed of GNAI1, GPSM2 and NUMA1. Identified in complex with the beta subunit GNB1 and the gamma subunit GNG1. Identified in complex with the beta subunit GNB1 and the gamma subunit GNG2. Component of the TAS2R14-GNAI1 complex, consisting of TAS2R14, GNAI1, GNB1 and GNG2; within the complex interacts with TAS2R14; this complex plays a role in the perception of bitterness. GTP binding causes dissociation of the heterotrimer, liberating the individual subunits so that they can interact with downstream effector proteins. Interacts (GDP-bound form) with GPSM1; this inhibits guanine nucleotide exchange and GTP binding. Interacts (GDP-bound form) with GPSM2 (via GoLoco domains); this inhibits guanine nucleotide exchange. Interacts with RGS10; this strongly enhances GTP hydrolysis. Interacts with RGS1 and RGS16. Interacts with RGS4. Interacts with RGS12. Interacts (via active GTP- or inactive GDP-bound forms) with RGS14 (via RGS and GoLoco domains). Interacts with RGS3, RGS6, RGS7, RGS8, RGS17, RGS18 and RGS20 (in vitro). Interacts (GDP-bound form) with RIC8A (via C-terminus); promoting GNAI1 folding and association with the plasma membrane. Interacts (inactive GDP-bound form) with NUCB1 (via GBA motif); the interaction leads to activation of GNAI1. Interacts (inactive GDP-bound form) with CCDC88C/DAPLE (via GBA motif); the interaction leads to activation of GNAI1. Interacts (inactive GDP-bound form) with CCDC8A/GIV (via GBA motif). Interacts with GPR15. In terms of processing, myristoylation at Gly-2 is required for membrane anchoring before palmitoylation. Palmitoylation at Cys-3 varies with membrane lipid composition.

The protein resides in the nucleus. Its subcellular location is the cytoplasm. It localises to the cell membrane. It is found in the cytoskeleton. The protein localises to the microtubule organizing center. The protein resides in the centrosome. Its subcellular location is the cell cortex. It localises to the membrane. The catalysed reaction is GTP + H2O = GDP + phosphate + H(+). Its function is as follows. Guanine nucleotide-binding proteins (G proteins) function as transducers downstream of G protein-coupled receptors (GPCRs) in numerous signaling cascades. The alpha chain contains the guanine nucleotide binding site and alternates between an active, GTP-bound state and an inactive, GDP-bound state. Signaling by an activated GPCR promotes GDP release and GTP binding. The alpha subunit has a low GTPase activity that converts bound GTP to GDP, thereby terminating the signal. Both GDP release and GTP hydrolysis are modulated by numerous regulatory proteins. Signaling is mediated via effector proteins, such as adenylate cyclase. Inhibits adenylate cyclase activity of ADCY1, ADCY5 and ADCY6, leading to decreased intracellular cAMP levels. The inactive GDP-bound form prevents the association of RGS14 with centrosomes and is required for the translocation of RGS14 from the cytoplasm to the plasma membrane. Required for normal cytokinesis during mitosis. Required for cortical dynein-dynactin complex recruitment during metaphase. This is Guanine nucleotide-binding protein G(i) subunit alpha-1 (Gnai1) from Rattus norvegicus (Rat).